The sequence spans 185 residues: MSTQVMNETKERMQKAISAYQRELATVRAGRANPSLLDKVAVEYYGAQTPLNQIASITVPEARMLVITPYDKTALGDIEKAIQKADLGVTPSNDGNIIRITIPPLTEERRKELAKLVKKYSEDAKVAVRNIRRDANDDLKKLEKNGEMTEDELRSSTEDVQKLTDEYVSKIDEITKDKEKEIMEV.

The protein belongs to the RRF family.

Its subcellular location is the cytoplasm. Responsible for the release of ribosomes from messenger RNA at the termination of protein biosynthesis. May increase the efficiency of translation by recycling ribosomes from one round of translation to another. The protein is Ribosome-recycling factor of Bacillus licheniformis (strain ATCC 14580 / DSM 13 / JCM 2505 / CCUG 7422 / NBRC 12200 / NCIMB 9375 / NCTC 10341 / NRRL NRS-1264 / Gibson 46).